The primary structure comprises 184 residues: Ribosome-recycling factor (184 aa).

This sequence belongs to the RRF family.

It localises to the cytoplasm. Functionally, responsible for the release of ribosomes from messenger RNA at the termination of protein biosynthesis. May increase the efficiency of translation by recycling ribosomes from one round of translation to another. The chain is Ribosome-recycling factor from Borrelia garinii subsp. bavariensis (strain ATCC BAA-2496 / DSM 23469 / PBi) (Borreliella bavariensis).